The chain runs to 565 residues: Adenine deaminase (565 aa).

It belongs to the metallo-dependent hydrolases superfamily. Adenine deaminase family. The cofactor is Mn(2+).

It catalyses the reaction adenine + H2O + H(+) = hypoxanthine + NH4(+). The protein is Adenine deaminase of Cereibacter sphaeroides (strain KD131 / KCTC 12085) (Rhodobacter sphaeroides).